The sequence spans 523 residues: Maintenance of mitochondrial morphology protein 1 (523 aa).

Residues M1–G43 are Lumenal-facing. A helical membrane pass occupies residues L44–F64. Residues G65–T523 are Cytoplasmic-facing. Disordered regions lie at residues P70–T118, Y128–H147, T295–G349, R420–L474, and G492–T523. Polar residues-rich tracts occupy residues G74–S96 and S105–T118. Residues T137–H147 show a composition bias toward basic residues. The region spanning Q151 to P412 is the SMP-LTD domain. Positions T295–E312 are enriched in polar residues. Gly residues predominate over residues G449–R468.

This sequence belongs to the MMM1 family. In terms of assembly, homodimer. Component of the ER-mitochondria encounter structure (ERMES) or MDM complex, composed of MMM1, MDM10, MDM12 and MDM34. An MMM1 homodimer associates with one molecule of MDM12 on each side in a pairwise head-to-tail manner, and the SMP-LTD domains of MMM1 and MDM12 generate a continuous hydrophobic tunnel for phospholipid trafficking.

It localises to the endoplasmic reticulum membrane. Component of the ERMES/MDM complex, which serves as a molecular tether to connect the endoplasmic reticulum (ER) and mitochondria. Components of this complex are involved in the control of mitochondrial shape and protein biogenesis, and function in nonvesicular lipid trafficking between the ER and mitochondria. The MDM12-MMM1 subcomplex functions in the major beta-barrel assembly pathway that is responsible for biogenesis of all outer membrane beta-barrel proteins, and acts in a late step after the SAM complex. The MDM10-MDM12-MMM1 subcomplex further acts in the TOM40-specific pathway after the action of the MDM12-MMM1 complex. Essential for establishing and maintaining the structure of mitochondria and maintenance of mtDNA nucleoids. The protein is Maintenance of mitochondrial morphology protein 1 of Paracoccidioides lutzii (strain ATCC MYA-826 / Pb01) (Paracoccidioides brasiliensis).